We begin with the raw amino-acid sequence, 109 residues long: uncharacterized protein (109 aa).

Transmembrane regions (helical) follow at residues 7–27, 37–57, and 63–83; these read IITI…PFFV, YIRY…VVYC, and ILTG…LGLH.

Belongs to the AzlD/HI_1737/HP1330 family.

It localises to the cell membrane. This is an uncharacterized protein from Haemophilus influenzae (strain ATCC 51907 / DSM 11121 / KW20 / Rd).